The primary structure comprises 105 residues: Cuticle protein AM1159 (105 aa).

The Chitin-binding type R&amp;R domain maps to 16–81; it reads DGNFNYNFQT…PESPLLPVGP (66 aa). The tract at residues 25 to 46 is disordered; sequence TSNGIEDTKTGTPGSQGQSNMQ.

Arthrodial membrane.

This is Cuticle protein AM1159 from Cancer pagurus (Rock crab).